Consider the following 184-residue polypeptide: Luciferin-binding protein (184 aa).

EF-hand domains lie at 10 to 45 (YHLRKMKTRMKRVDVTGDGFISREDYELIAVRIAKI), 46 to 81 (AKLSAEKAEETRQEFLRVADQLGLAPGVRISVEEAA), 98 to 133 (MAVIQSLIMYDCIDTDKDGYVSLPEFKAFLQAVGPD), and 134 to 169 (ITDDKAITCFNTLDFNKNGQISRDEFLVTVNDFLFG). 10 residues coordinate Ca(2+): D111, D113, D115, Y117, E122, D147, N149, N151, Q153, and E158.

In terms of biological role, this Ca(2+)-dependent protein binds to luciferin. The luciferin of LBP is capable of reacting with luciferase and O(2) only when calcium is bound. This Renilla reniformis (Sea pansy) protein is Luciferin-binding protein.